Reading from the N-terminus, the 164-residue chain is Pathogenesis-related protein PRB1-2 (164 aa).

The signal sequence occupies residues 1 to 24; the sequence is MQTPKLAILLALAMAAAMVNLSQA. Residue Gln-25 is modified to Pyrrolidone carboxylic acid. Positions 34 to 152 constitute an SCP domain; that stretch reads PHNAARSAVG…NRGVFITCNY (119 aa). Intrachain disulfides connect Cys-68-Cys-140, Cys-113-Cys-119, and Cys-135-Cys-150.

It belongs to the CRISP family.

Functionally, probably involved in the defense reaction of plants against pathogens. In Hordeum vulgare (Barley), this protein is Pathogenesis-related protein PRB1-2.